A 514-amino-acid polypeptide reads, in one-letter code: 2-isopropylmalate synthase (514 aa).

The 263-residue stretch at 5 to 267 folds into the Pyruvate carboxyltransferase domain; it reads IYIFDTTLRD…HTDIVTEEIT (263 aa). 4 residues coordinate Mn(2+): D14, H202, H204, and N238. Residues 392-514 are regulatory domain; sequence KLKYYQVFTG…SKDLQKISAN (123 aa).

Belongs to the alpha-IPM synthase/homocitrate synthase family. LeuA type 1 subfamily. As to quaternary structure, homodimer. It depends on Mn(2+) as a cofactor.

The protein localises to the cytoplasm. It carries out the reaction 3-methyl-2-oxobutanoate + acetyl-CoA + H2O = (2S)-2-isopropylmalate + CoA + H(+). Its pathway is amino-acid biosynthesis; L-leucine biosynthesis; L-leucine from 3-methyl-2-oxobutanoate: step 1/4. Its function is as follows. Catalyzes the condensation of the acetyl group of acetyl-CoA with 3-methyl-2-oxobutanoate (2-ketoisovalerate) to form 3-carboxy-3-hydroxy-4-methylpentanoate (2-isopropylmalate). This is 2-isopropylmalate synthase from Clostridium kluyveri (strain NBRC 12016).